A 244-amino-acid polypeptide reads, in one-letter code: Protein TIFY 10b (244 aa).

Residues 97 to 132 (QEPEKRQLTIFYGGKVLVFNDFPADKAKGLMQLASK) form the Tify domain. Residues 185–210 (PIARKASLHRFLEKRKDRLNAKTPYQ) carry the Jas motif. The short motif at 187–194 (ARKASLHR) is the Nuclear localization signal element. Residues 193–244 (HRFLEKRKDRLNAKTPYQASPSDATPVKKEPESQPWLGLGPNAVVKPIERGQ) are disordered. Positions 194 to 204 (RFLEKRKDRLN) are enriched in basic and acidic residues.

The protein belongs to the TIFY/JAZ family. Post-translationally, ubiquitinated. Targeted for degradation by the SCF(COI1) E3 ubiquitin ligase-proteasome pathway during jasmonate signaling.

The protein resides in the nucleus. Repressor of jasmonate responses. The protein is Protein TIFY 10b of Oryza sativa subsp. indica (Rice).